The primary structure comprises 253 residues: 5'-nucleotidase SurE (253 aa).

Positions 8, 9, 39, and 92 each coordinate a divalent metal cation.

This sequence belongs to the SurE nucleotidase family. Requires a divalent metal cation as cofactor.

It is found in the cytoplasm. The enzyme catalyses a ribonucleoside 5'-phosphate + H2O = a ribonucleoside + phosphate. Its function is as follows. Nucleotidase that shows phosphatase activity on nucleoside 5'-monophosphates. This chain is 5'-nucleotidase SurE, found in Burkholderia thailandensis (strain ATCC 700388 / DSM 13276 / CCUG 48851 / CIP 106301 / E264).